The sequence spans 190 residues: 3-isopropylmalate dehydratase small subunit (190 aa).

The protein belongs to the LeuD family. LeuD type 1 subfamily. Heterodimer of LeuC and LeuD.

The enzyme catalyses (2R,3S)-3-isopropylmalate = (2S)-2-isopropylmalate. The protein operates within amino-acid biosynthesis; L-leucine biosynthesis; L-leucine from 3-methyl-2-oxobutanoate: step 2/4. Functionally, catalyzes the isomerization between 2-isopropylmalate and 3-isopropylmalate, via the formation of 2-isopropylmaleate. This chain is 3-isopropylmalate dehydratase small subunit, found in Staphylococcus aureus (strain MRSA252).